The sequence spans 444 residues: 23S rRNA (uracil(1939)-C(5))-methyltransferase RlmD (444 aa).

The TRAM domain occupies 5–64; the sequence is KPKLNLTSQTARIVNLSHDGRGIARINGKATFIQGALPGEVVEFQYTRVKKDFDEGKLLS. Residues C77, C83, C86, and C166 each contribute to the [4Fe-4S] cluster site. Positions 276, 305, 310, 326, 353, and 374 each coordinate S-adenosyl-L-methionine. The active-site Nucleophile is the C400.

Belongs to the class I-like SAM-binding methyltransferase superfamily. RNA M5U methyltransferase family. RlmD subfamily.

It carries out the reaction uridine(1939) in 23S rRNA + S-adenosyl-L-methionine = 5-methyluridine(1939) in 23S rRNA + S-adenosyl-L-homocysteine + H(+). Catalyzes the formation of 5-methyl-uridine at position 1939 (m5U1939) in 23S rRNA. This is 23S rRNA (uracil(1939)-C(5))-methyltransferase RlmD from Legionella pneumophila (strain Lens).